A 125-amino-acid polypeptide reads, in one-letter code: RxLR effector protein Avh6 (125 aa).

A signal peptide spans 1 to 25 (MRLSSTTFVVLAAVLLASGTAVSKA). A RxLR-dEER motif is present at residues 48-70 (RFLRSHHTEDGEAKLSNYDNEER).

It belongs to the RxLR effector family.

It is found in the secreted. It localises to the host cell. Effector that suppresses plant defense responses during the early stages of pathogen infection. Suppresses cell death induced by effectors and PAMPs in plant hosts. Triggers a hypersensitive response (HR) in the presence of Rps1d. Suppresses BAX-induced cell death and enhan,ced P.capsici infection in Nicotiana benthamiana. Also suppresses effector-triggered immunity induction by associating with Avr1b and Rps1b, suggesting a role in suppressing plant immunity. This chain is RxLR effector protein Avh6, found in Phytophthora sojae (strain P6497) (Soybean stem and root rot agent).